The sequence spans 298 residues: NADH-cytochrome b5 reductase 1 (298 aa).

Residues 14-34 (VILAGAYLIDPSALPFVAAGV) form a helical membrane-spanning segment. Positions 56 to 159 (KEYRKFKLVD…RGPKGQFSYT (104 aa)) constitute an FAD-binding FR-type domain. FAD contacts are provided by residues 139-154 (SELSIGDSINARGPKG) and 165-197 (AIGMIAGGTGLTPMLQIIRAIVKNPEDKTQVNF).

It belongs to the flavoprotein pyridine nucleotide cytochrome reductase family. In terms of assembly, monomer. Component of the 2-(3-amino-3-carboxypropyl)histidine synthase complex composed of DPH1, DPH2, DPH3 and a NADH-dependent reductase, predominantly CBR1. Requires FAD as cofactor.

It localises to the mitochondrion outer membrane. The catalysed reaction is 2 Fe(III)-[cytochrome b5] + NADH = 2 Fe(II)-[cytochrome b5] + NAD(+) + H(+). The enzyme catalyses 2 Fe(3+)-[Dph3] + NADH = 2 Fe(2+)-[Dph3] + NAD(+) + H(+). Its pathway is protein modification; peptidyl-diphthamide biosynthesis. In terms of biological role, NADH-dependent reductase for DPH3 and cytochrome b5. Required for the first step of diphthamide biosynthesis, a post-translational modification of histidine which occurs in elongation factor 2. DPH1 and DPH2 transfer a 3-amino-3-carboxypropyl (ACP) group from S-adenosyl-L-methionine (SAM) to a histidine residue, the reaction is assisted by a reduction system comprising DPH3 and a NADH-dependent reductase, predominantly CBR1. By reducing DPH3, also involved in the formation of the tRNA wobble base modification mcm5s 2U (5-methoxycarbonylmethyl-2-thiouridine), mediated by the elongator complex. The cytochrome b5/NADH cytochrome b5 reductase electron transfer system supports the catalytic activity of several sterol biosynthetic enzymes. This Mortierella alpina (Oleaginous fungus) protein is NADH-cytochrome b5 reductase 1 (CBR1).